The sequence spans 414 residues: Putative nickel insertion protein (414 aa).

A disordered region spans residues 70–91 (ATHHDHDHSQDQTHHHHADHAP).

Belongs to the LarC family.

This is Putative nickel insertion protein from Picosynechococcus sp. (strain ATCC 27264 / PCC 7002 / PR-6) (Agmenellum quadruplicatum).